A 307-amino-acid chain; its full sequence is Putative S-adenosyl-L-methionine-dependent methyltransferase MUL_4430 (307 aa).

S-adenosyl-L-methionine contacts are provided by residues D128 and 157 to 158 (DL).

This sequence belongs to the UPF0677 family.

In terms of biological role, exhibits S-adenosyl-L-methionine-dependent methyltransferase activity. In Mycobacterium ulcerans (strain Agy99), this protein is Putative S-adenosyl-L-methionine-dependent methyltransferase MUL_4430.